A 216-amino-acid polypeptide reads, in one-letter code: DNA-directed RNA polymerase subunit alpha (216 aa).

Belongs to the RNA polymerase alpha chain family. In terms of assembly, in plastids the minimal PEP RNA polymerase catalytic core is composed of four subunits: alpha, beta, beta', and beta''. When a (nuclear-encoded) sigma factor is associated with the core the holoenzyme is formed, which can initiate transcription.

Its subcellular location is the plastid. The protein resides in the chloroplast. It carries out the reaction RNA(n) + a ribonucleoside 5'-triphosphate = RNA(n+1) + diphosphate. Functionally, DNA-dependent RNA polymerase catalyzes the transcription of DNA into RNA using the four ribonucleoside triphosphates as substrates. This is DNA-directed RNA polymerase subunit alpha (rpoA) from Euglena granulata.